The sequence spans 361 residues: Chorismate synthase (361 aa).

Positions 48 and 54 each coordinate NADP(+). Residues 125–127 (RSS), 238–239 (NA), Gly278, 293–297 (KPTSS), and Arg319 contribute to the FMN site.

This sequence belongs to the chorismate synthase family. Homotetramer. The cofactor is FMNH2.

It carries out the reaction 5-O-(1-carboxyvinyl)-3-phosphoshikimate = chorismate + phosphate. The protein operates within metabolic intermediate biosynthesis; chorismate biosynthesis; chorismate from D-erythrose 4-phosphate and phosphoenolpyruvate: step 7/7. Functionally, catalyzes the anti-1,4-elimination of the C-3 phosphate and the C-6 proR hydrogen from 5-enolpyruvylshikimate-3-phosphate (EPSP) to yield chorismate, which is the branch point compound that serves as the starting substrate for the three terminal pathways of aromatic amino acid biosynthesis. This reaction introduces a second double bond into the aromatic ring system. The polypeptide is Chorismate synthase (Citrobacter koseri (strain ATCC BAA-895 / CDC 4225-83 / SGSC4696)).